Reading from the N-terminus, the 774-residue chain is 5-methyltetrahydropteroyltriglutamate--homocysteine methyltransferase (774 aa).

5-methyltetrahydropteroyltri-L-glutamate-binding positions include 24–27 (RELK) and K120. L-homocysteine contacts are provided by residues 446-448 (IGS) and E499. L-methionine is bound by residues 446-448 (IGS) and E499. W576 contributes to the 5-methyltetrahydropteroyltri-L-glutamate binding site. Residue D614 coordinates L-homocysteine. D614 provides a ligand contact to L-methionine. E620 is a binding site for 5-methyltetrahydropteroyltri-L-glutamate. Zn(2+) contacts are provided by H656, C658, and E680. Residue H709 is the Proton donor of the active site. C741 lines the Zn(2+) pocket.

Belongs to the vitamin-B12 independent methionine synthase family. Zn(2+) is required as a cofactor.

The catalysed reaction is 5-methyltetrahydropteroyltri-L-glutamate + L-homocysteine = tetrahydropteroyltri-L-glutamate + L-methionine. It participates in amino-acid biosynthesis; L-methionine biosynthesis via de novo pathway; L-methionine from L-homocysteine (MetE route): step 1/1. In terms of biological role, catalyzes the transfer of a methyl group from 5-methyltetrahydrofolate to homocysteine resulting in methionine formation. The sequence is that of 5-methyltetrahydropteroyltriglutamate--homocysteine methyltransferase from Streptomyces griseus subsp. griseus (strain JCM 4626 / CBS 651.72 / NBRC 13350 / KCC S-0626 / ISP 5235).